A 98-amino-acid chain; its full sequence is Integration host factor subunit alpha (98 aa).

Residues 49–71 are disordered; the sequence is FGNFDLRDKNQRPGRNPKTGEDI.

It belongs to the bacterial histone-like protein family. In terms of assembly, heterodimer of an alpha and a beta chain.

Its function is as follows. This protein is one of the two subunits of integration host factor, a specific DNA-binding protein that functions in genetic recombination as well as in transcriptional and translational control. The chain is Integration host factor subunit alpha from Shewanella sp. (strain MR-4).